We begin with the raw amino-acid sequence, 639 residues long: Transcription factor phomR' (639 aa).

Residues 14 to 41 (CWTCRLRRKKCNEGGPPCDNCEARGIHC) constitute a DNA-binding region (zn(2)-C6 fungal-type). 2 disordered regions span residues 58–136 (REEA…AGTG) and 476–499 (LPRS…TGPE). A compositionally biased stretch (low complexity) spans 68–108 (SGRGRSYSRSSSTAAAAAPKPAEGAMVTGGSSSSSRGSGSS).

It localises to the nucleus. In terms of biological role, transcription factor; part of the gene cluster that mediates the biosynthesis of the phomopsins, a group of hexapeptide mycotoxins which infects lupins and causes lupinosis disease in livestock. May play a role in the regulation of the production of phomopsins. This chain is Transcription factor phomR', found in Diaporthe leptostromiformis (Lupinosis disease fungus).